A 365-amino-acid chain; its full sequence is D-alanine--D-alanine ligase (365 aa).

The ATP-grasp domain maps to 140 to 346 (KKILRRHGLQ…YSQLLTDLIY (207 aa)). Residue 173 to 228 (EKQLSYPIFVKPANLGSSVGISKVKNREELIQGIDLAVKYDMKCLAEEFIPGKEIE) coordinates ATP. Residues Asp-299, Glu-313, and Asn-315 each contribute to the Mg(2+) site.

It belongs to the D-alanine--D-alanine ligase family. Mg(2+) serves as cofactor. Mn(2+) is required as a cofactor.

It localises to the cytoplasm. The enzyme catalyses 2 D-alanine + ATP = D-alanyl-D-alanine + ADP + phosphate + H(+). Its pathway is cell wall biogenesis; peptidoglycan biosynthesis. Its function is as follows. Cell wall formation. The chain is D-alanine--D-alanine ligase from Natranaerobius thermophilus (strain ATCC BAA-1301 / DSM 18059 / JW/NM-WN-LF).